The sequence spans 353 residues: Photosystem II protein D1 (353 aa).

Thr2 bears the N-acetylthreonine mark. Thr2 is subject to Phosphothreonine. A run of 3 helical transmembrane segments spans residues 29–46 (YIGWFGVLMIPTLLTATS), 118–133 (HFLLGVACYMGREWEL), and 142–156 (WIAVAYSAPVAAATA). His118 contributes to the chlorophyll a binding site. Tyr126 is a pheophytin a binding site. Residues Asp170 and Glu189 each contribute to the [CaMn4O5] cluster site. A helical membrane pass occupies residues 197-218 (FHMLGVAGVFGGSLFSAMHGSL). Chlorophyll a is bound at residue His198. Residues His215 and 264–265 (SF) contribute to the a quinone site. His215 provides a ligand contact to Fe cation. His272 contributes to the Fe cation binding site. Residues 274–288 (FLAAWPVVGIWFTAL) traverse the membrane as a helical segment. 4 residues coordinate [CaMn4O5] cluster: His332, Glu333, Asp342, and Ala344. The propeptide occupies 345-353 (AVEVPSING).

Belongs to the reaction center PufL/M/PsbA/D family. PSII is composed of 1 copy each of membrane proteins PsbA, PsbB, PsbC, PsbD, PsbE, PsbF, PsbH, PsbI, PsbJ, PsbK, PsbL, PsbM, PsbT, PsbX, PsbY, PsbZ, Psb30/Ycf12, at least 3 peripheral proteins of the oxygen-evolving complex and a large number of cofactors. It forms dimeric complexes. The D1/D2 heterodimer binds P680, chlorophylls that are the primary electron donor of PSII, and subsequent electron acceptors. It shares a non-heme iron and each subunit binds pheophytin, quinone, additional chlorophylls, carotenoids and lipids. D1 provides most of the ligands for the Mn4-Ca-O5 cluster of the oxygen-evolving complex (OEC). There is also a Cl(-1) ion associated with D1 and D2, which is required for oxygen evolution. The PSII complex binds additional chlorophylls, carotenoids and specific lipids. serves as cofactor. Tyr-161 forms a radical intermediate that is referred to as redox-active TyrZ, YZ or Y-Z. In terms of processing, C-terminally processed by CTPA; processing is essential to allow assembly of the oxygen-evolving complex and thus photosynthetic growth.

It is found in the plastid. It localises to the chloroplast thylakoid membrane. The enzyme catalyses 2 a plastoquinone + 4 hnu + 2 H2O = 2 a plastoquinol + O2. In terms of biological role, photosystem II (PSII) is a light-driven water:plastoquinone oxidoreductase that uses light energy to abstract electrons from H(2)O, generating O(2) and a proton gradient subsequently used for ATP formation. It consists of a core antenna complex that captures photons, and an electron transfer chain that converts photonic excitation into a charge separation. The D1/D2 (PsbA/PsbD) reaction center heterodimer binds P680, the primary electron donor of PSII as well as several subsequent electron acceptors. The polypeptide is Photosystem II protein D1 (Cucumis sativus (Cucumber)).